Reading from the N-terminus, the 490-residue chain is GTPase Der (490 aa).

EngA-type G domains follow at residues 3–166 (PVVA…MEDL) and 203–376 (IKLA…DSST). GTP contacts are provided by residues 9–16 (GRPNVGKS), 56–60 (DTGGI), 118–121 (NKTD), 209–216 (GRPNVGKS), 256–260 (DTAGV), and 321–324 (NKWD). The KH-like domain maps to 377–461 (RRVGTSMLTR…PIRIQFKEGE (85 aa)).

This sequence belongs to the TRAFAC class TrmE-Era-EngA-EngB-Septin-like GTPase superfamily. EngA (Der) GTPase family. Associates with the 50S ribosomal subunit.

Functionally, GTPase that plays an essential role in the late steps of ribosome biogenesis. The protein is GTPase Der of Shigella flexneri serotype 5b (strain 8401).